A 265-amino-acid polypeptide reads, in one-letter code: Lysosomal membrane ascorbate-dependent ferrireductase CYB561A3 (265 aa).

Residues 1–2 (MA) are Cytoplasmic-facing. The helical transmembrane segment at 3 to 23 (VGWFYLSVLALCSLGSMCILF) threads the bilayer. The region spanning 12 to 219 (ALCSLGSMCI…FGLLVLYILL (208 aa)) is the Cytochrome b561 domain. The Lumenal portion of the chain corresponds to 24-45 (TIYWMRYWHGGFAWDGSMLMFN). Residues 46–66 (WHPVLMVTGMVVLYSAASLVY) traverse the membrane as a helical segment. H47 and R67 together coordinate heme b. Over 67–83 (RLPQSWVGPRLPWKSGH) the chain is Cytoplasmic. Residues R76 and K80 each coordinate L-ascorbate. Position 83 (H83) interacts with heme b. A helical transmembrane segment spans residues 84 to 104 (AAMHLLAFLLTVLGLHAVFEF). Residues 105-119 (HNHAKIPHLYSLHSW) lie on the Lumenal side of the membrane. Residues 112–115 (HLYS) and H117 each bind heme b. A helical transmembrane segment spans residues 120–140 (LGITTVFLFACQWFLGFSVFL). Residues 141–154 (LPWASMWLRSLLKP) lie on the Cytoplasmic side of the membrane. R149 is a binding site for L-ascorbate. Residues 155–175 (IHVFFGASILSLAIASVVSGI) form a helical membrane-spanning segment. 2 residues coordinate heme b: H156 and E177. Residues 176 to 197 (NEKLFFSLKNGTKTYSNLPSEA) lie on the Lumenal side of the membrane. The N-linked (GlcNAc...) asparagine glycan is linked to N185. Residues 198-218 (VFANCAGMLVVVFGLLVLYIL) traverse the membrane as a helical segment. Topologically, residues 219–265 (LASSWKRPEPGMQAEREPTRTRGRAGTPEVMLEGERGLAEPLLQKRS) are cytoplasmic. Heme b is bound at residue K224. Residues 228–238 (PGMQAEREPTR) are compositionally biased toward basic and acidic residues. The disordered stretch occupies residues 228-265 (PGMQAEREPTRTRGRAGTPEVMLEGERGLAEPLLQKRS).

As to quaternary structure, homodimer. Requires heme b as cofactor. N-glycosylated.

Its subcellular location is the late endosome membrane. The protein localises to the lysosome membrane. The enzyme catalyses Fe(3+)(out) + L-ascorbate(in) = monodehydro-L-ascorbate radical(in) + Fe(2+)(out) + H(+). Functionally, transmembrane reductase that uses ascorbate as an electron donor in the cytoplasm and transfers electrons across membranes to reduce iron cations Fe(3+) into Fe(2+) in the lumen of the late endosome and lysosome. Reduced iron can then be extruded from the late endosome and lysosome to the cytoplasm by divalent metal-specific transporters. It is therefore most probably involved in endosomal and lysosomal cellular iron homeostasis. In Bos taurus (Bovine), this protein is Lysosomal membrane ascorbate-dependent ferrireductase CYB561A3.